The primary structure comprises 288 residues: Alpha/beta hydrolase domain-containing protein 17B (288 aa).

Residues serine 170, aspartate 235, and histidine 264 each act as charge relay system in the active site. Residue serine 282 is modified to Phosphoserine.

Belongs to the AB hydrolase superfamily. ABHD17 family. In terms of processing, palmitoylated on cysteine residues located in a cysteine cluster at the N-terminus which promotes membrane localization. Palmitoylation is required for post-synaptic localization and for depalmitoylating activity towards DLG4/PSD95. Expressed in brain.

The protein resides in the cell membrane. Its subcellular location is the recycling endosome membrane. It is found in the cell projection. It localises to the dendritic spine. The protein localises to the postsynaptic density membrane. The enzyme catalyses S-hexadecanoyl-L-cysteinyl-[protein] + H2O = L-cysteinyl-[protein] + hexadecanoate + H(+). Hydrolyzes fatty acids from S-acylated cysteine residues in proteins. Has depalmitoylating activity towards DLG4/PSD95. Has depalmitoylating activity towards GAP43. Has depalmitoylating activity towards MAP6. Has depalmitoylating activity towards NRAS. This chain is Alpha/beta hydrolase domain-containing protein 17B, found in Mus musculus (Mouse).